Reading from the N-terminus, the 1745-residue chain is ADAMTS-like protein 1 (1745 aa).

The N-terminal stretch at 1-28 (MECCRRAAPGTPLLVLAFLLLSSRTARS) is a signal peptide. In terms of domain architecture, TSP type-1 1 spans 33 to 82 (EGLWDAWGPWSECSRTCGGGASYSLRRCLSSKSCEGRNIRYRTCSNVDCP). 3 disulfide bridges follow: Cys45–Cys76, Cys49–Cys81, and Cys60–Cys66. Residue Asn251 is glycosylated (N-linked (GlcNAc...) asparagine). O-linked (Fuc...) serine glycans are attached at residues Ser310 and Ser391. 6 TSP type-1 domains span residues 376 to 424 (PLPR…MYTP), 436 to 493 (DCPK…TPCY), 522 to 584 (EEPS…GPCN), 607 to 667 (ELYD…DPCP), 703 to 762 (CPPA…KKDD), and 763 to 825 (CPSE…ATCA). O-linked (Fuc...) threonine glycosylation is present at Thr451. 3 disulfides stabilise this stretch: Cys534-Cys578, Cys538-Cys583, and Cys549-Cys567. Cystine bridges form between Cys775/Cys819, Cys779/Cys824, Cys790/Cys807, and Cys874/Cys922. One can recognise an Ig-like C2-type 1 domain in the interval 836–938 (PHIAAARNIY…EQFVIKLIGG (103 aa)). Disordered stretches follow at residues 966 to 991 (EALQTHKHQNGIFSNGSKAEKRGLTA) and 1114 to 1137 (VSGFSSSLRSSSGEAGGGSRRPHR). Low complexity predominate over residues 1115–1126 (SGFSSSLRSSSG). Ig-like C2-type domains are found at residues 1139-1241 (PAIL…IAVT), 1261-1352 (PTVT…TQLL), and 1378-1468 (PSVL…ASLV). 3 disulfide bridges follow: Cys1177-Cys1225, Cys1283-Cys1336, and Cys1401-Cys1452. 2 TSP type-1 domains span residues 1528 to 1591 (CPSR…QLCV) and 1649 to 1709 (CSVH…TPCE). The PLAC domain maps to 1709 to 1745 (ENTECRDTTRYCEKVRQLKLCQLGQFRSRCCGTCGKA).

Monomer. Post-translationally, glycosylated. O-fucosylated by POFUT2 on a serine or a threonine residue found within the consensus sequence C1-X(2)-(S/T)-C2-G of the TSP type-1 repeat domains where C1 and C2 are the first and second cysteine residue of the repeat, respectively. Fucosylated repeats can then be further glycosylated by the addition of a beta-1,3-glucose residue by the glucosyltransferase, B3GALTL. Fucosylation mediates the efficient secretion of ADAMTS family members. Can also be C-glycosylated with one or two mannose molecules on tryptophan residues within the consensus sequence W-X-X-W of the TPRs, and N-glycosylated. These other glycosylations can also facilitate secretion. Disulfide bonds are present.

Its subcellular location is the secreted. It is found in the extracellular space. The protein localises to the extracellular matrix. The polypeptide is ADAMTS-like protein 1 (Adamtsl1) (Mus musculus (Mouse)).